Reading from the N-terminus, the 343-residue chain is 4-hydroxy-2-oxovalerate aldolase 1 (343 aa).

One can recognise a Pyruvate carboxyltransferase domain in the interval V8–T260. R16–D17 contributes to the substrate binding site. D17 serves as a coordination point for Mn(2+). H20 acts as the Proton acceptor in catalysis. Positions 170 and 199 each coordinate substrate. Positions 199 and 201 each coordinate Mn(2+). Y290 is a binding site for substrate.

The protein belongs to the 4-hydroxy-2-oxovalerate aldolase family.

It catalyses the reaction (S)-4-hydroxy-2-oxopentanoate = acetaldehyde + pyruvate. The sequence is that of 4-hydroxy-2-oxovalerate aldolase 1 from Dechloromonas aromatica (strain RCB).